We begin with the raw amino-acid sequence, 444 residues long: Protein phosphatase 2C homolog C10F6.17c (444 aa).

A PPM-type phosphatase domain is found at Arg85–Phe439. The Mn(2+) site is built by Asp121, Gly122, and Asp344.

This sequence belongs to the PP2C family. The cofactor is Mg(2+). Mn(2+) serves as cofactor.

The protein localises to the mitochondrion. The catalysed reaction is O-phospho-L-seryl-[protein] + H2O = L-seryl-[protein] + phosphate. The enzyme catalyses O-phospho-L-threonyl-[protein] + H2O = L-threonyl-[protein] + phosphate. Involved in regulation of pyruvate dehydrogenase activity. This Schizosaccharomyces pombe (strain 972 / ATCC 24843) (Fission yeast) protein is Protein phosphatase 2C homolog C10F6.17c.